Here is a 157-residue protein sequence, read N- to C-terminus: Protein Smg homolog (157 aa).

Belongs to the Smg family.

The sequence is that of Protein Smg homolog from Aeromonas salmonicida (strain A449).